Reading from the N-terminus, the 391-residue chain is MSKRRVVVGMSGGVDSSVTAWLLKEQGYDVVGLFMKNWEDDDDGEYCSTRQDWIDVVSVADLIGIDVEAVNFAAEYKDRVFAEFLREYSAGRTPNPDVLCNAEIKFKAFLDHAMSLDAEMIATGHYARVRERDGRFELLKAFDHTKDQSYFLHRLNQAQLSKTMFPLGEIPKTKVREIAAQIGLPNAKKKDSTGICFIGERPFRDFLNRYLPTKPGPMKTPDGKVVGEHIGLAFYTFGQRKGIGLGGSKSGSGEPWFVAAKDIASNTLYVVQGHDHPWLLSRELVAGNVSWVAGEPPADGFACGAKTRYRQADAACVFGGAATGAAAAGPAGEVRFSLAFDDAQWAVTPGQSAVLYDGEICLGGGIIESAATGQPGQATSAGHAPALAEAR.

Residues 9–16 (GMSGGVDS) and methionine 35 contribute to the ATP site. The interaction with target base in tRNA stretch occupies residues 95–97 (NPD). The Nucleophile role is filled by cysteine 100. A disulfide bond links cysteine 100 and cysteine 196. ATP is bound at residue glycine 124. Residues 146–148 (KDQ) form an interaction with tRNA region. The Cysteine persulfide intermediate role is filled by cysteine 196. The interaction with tRNA stretch occupies residues 308–309 (RY).

The protein belongs to the MnmA/TRMU family.

It localises to the cytoplasm. The catalysed reaction is S-sulfanyl-L-cysteinyl-[protein] + uridine(34) in tRNA + AH2 + ATP = 2-thiouridine(34) in tRNA + L-cysteinyl-[protein] + A + AMP + diphosphate + H(+). Its function is as follows. Catalyzes the 2-thiolation of uridine at the wobble position (U34) of tRNA, leading to the formation of s(2)U34. This chain is tRNA-specific 2-thiouridylase MnmA, found in Burkholderia cenocepacia (strain HI2424).